The chain runs to 369 residues: Putative agmatine deiminase 2 (369 aa).

Cys-356 serves as the catalytic Amidino-cysteine intermediate.

This sequence belongs to the agmatine deiminase family.

It catalyses the reaction agmatine + H2O = N-carbamoylputrescine + NH4(+). The polypeptide is Putative agmatine deiminase 2 (Listeria monocytogenes serovar 1/2a (strain ATCC BAA-679 / EGD-e)).